A 122-amino-acid polypeptide reads, in one-letter code: Large ribosomal subunit protein uL18 (122 aa).

The tract at residues 1–27 is disordered; sequence MATLSKKQQTQKRHKRLRRHLNGTNHR. Basic residues predominate over residues 9 to 27; sequence QTQKRHKRLRRHLNGTNHR.

It belongs to the universal ribosomal protein uL18 family. As to quaternary structure, part of the 50S ribosomal subunit; part of the 5S rRNA/L5/L18/L25 subcomplex. Contacts the 5S and 23S rRNAs.

In terms of biological role, this is one of the proteins that bind and probably mediate the attachment of the 5S RNA into the large ribosomal subunit, where it forms part of the central protuberance. The protein is Large ribosomal subunit protein uL18 of Prochlorococcus marinus (strain MIT 9211).